A 322-amino-acid polypeptide reads, in one-letter code: Transaldolase (322 aa).

The Schiff-base intermediate with substrate role is filled by Lys136.

It belongs to the transaldolase family. Type 1 subfamily. Homodimer.

Its subcellular location is the cytoplasm. It carries out the reaction D-sedoheptulose 7-phosphate + D-glyceraldehyde 3-phosphate = D-erythrose 4-phosphate + beta-D-fructose 6-phosphate. It functions in the pathway carbohydrate degradation; pentose phosphate pathway; D-glyceraldehyde 3-phosphate and beta-D-fructose 6-phosphate from D-ribose 5-phosphate and D-xylulose 5-phosphate (non-oxidative stage): step 2/3. In terms of biological role, transaldolase is important for the balance of metabolites in the pentose-phosphate pathway. The protein is Transaldolase of Xanthomonas oryzae pv. oryzae (strain KACC10331 / KXO85).